Reading from the N-terminus, the 149-residue chain is Gamma-glutamylaminecyclotransferase (149 aa).

7 to 10 (YGTL) is a substrate binding site. Glu82 (proton acceptor) is an active-site residue.

The protein belongs to the gamma-glutamylcyclotransferase family. Monomer.

It carries out the reaction epsilon-(gamma-L-glutamyl)-L-lysine = 5-oxo-L-proline + L-lysine. Contributes to degradation of proteins cross-linked by transglutaminases by degrading the cross-link between a lysine and a glutamic acid residue. Catalyzes the formation of 5-oxo-L-proline from L-gamma-glutamyl-L-epsilon-lysine. Inactive with L-gamma-glutamyl-alpha-amino acid substrates such as L-gamma-glutamyl-L-alpha-cysteine and L-gamma-glutamyl-L-alpha-alanine. The polypeptide is Gamma-glutamylaminecyclotransferase (Ggact) (Rattus norvegicus (Rat)).